The primary structure comprises 308 residues: Elongation factor Ts (308 aa).

Positions 80–83 are involved in Mg(2+) ion dislocation from EF-Tu; it reads TDFV.

Belongs to the EF-Ts family.

It localises to the cytoplasm. Associates with the EF-Tu.GDP complex and induces the exchange of GDP to GTP. It remains bound to the aminoacyl-tRNA.EF-Tu.GTP complex up to the GTP hydrolysis stage on the ribosome. The protein is Elongation factor Ts of Allorhizobium ampelinum (strain ATCC BAA-846 / DSM 112012 / S4) (Agrobacterium vitis (strain S4)).